A 284-amino-acid chain; its full sequence is Prolyl 4-hydroxylase subunit alpha (284 aa).

Residues 169–284 enclose the Fe2OG dioxygenase domain; that stretch reads NFNSIKTQTQ…PRIAITTWIY (116 aa). Positions 191, 193, and 266 each coordinate Fe cation. Residue arginine 276 coordinates 2-oxoglutarate.

It belongs to the P4HA family. As to quaternary structure, heterotetramer of two alpha-1 chains and two beta chains (the beta chain is the multi-functional PDI). It depends on Fe(2+) as a cofactor. L-ascorbate serves as cofactor.

Its subcellular location is the cytoplasm. It carries out the reaction L-prolyl-[Skp1 protein] + 2-oxoglutarate + O2 = trans-4-hydroxy-L-prolyl-[Skp1 protein] + succinate + CO2. Inhibited by the prolyl-hydroxylase inhibitors alpha,alpha'-dipyridyl and ethyl 3,4-dihydroxybenzoate. Functionally, catalyzes the post-translational formation of 4-hydroxyproline. Probably hydroxylates skp1 on Pro-143. The polypeptide is Prolyl 4-hydroxylase subunit alpha (phyA) (Dictyostelium discoideum (Social amoeba)).